The following is a 334-amino-acid chain: N-chimaerin (334 aa).

Over residues 1–10 (MPSKESWSGR) the composition is skewed to polar residues. The disordered stretch occupies residues 1-22 (MPSKESWSGRKTNRATVHKSKQ). Residue Thr-67 is modified to Phosphothreonine. The segment at 80 to 130 (VHNFKVHTFRGPHWCEYCANFMWGLIAQGVKCADCGLNVHKQCSKMVPNDC) adopts a Phorbol-ester/DAG-type zinc-finger fold. Residues 143-334 (CDLTTLVKAR…LLIKNEDILF (192 aa)) enclose the Rho-GAP domain. Thr-215 is modified (phosphothreonine).

As to quaternary structure, interacts with EPHA4; effector of EPHA4 in axon guidance linking EPHA4 activation to RAC1 regulation. Post-translationally, phosphorylated. Phosphorylation is EPHA4 kinase activity-dependent.

Functionally, GTPase-activating protein for p21-rac and a phorbol ester receptor. Involved in the assembly of neuronal locomotor circuits as a direct effector of EPHA4 in axon guidance. The polypeptide is N-chimaerin (CHN1) (Bos taurus (Bovine)).